The sequence spans 345 residues: Holliday junction branch migration complex subunit RuvB (345 aa).

Residues 1-22 form a disordered region; that stretch reads MIETDALSGGTPRRLVTQQPLS. Residues 4–193 are large ATPase domain (RuvB-L); sequence TDALSGGTPR…FGIVARLEFY (190 aa). ATP-binding positions include leucine 32, arginine 33, glycine 74, lysine 77, threonine 78, threonine 79, 140-142, arginine 183, tyrosine 193, and arginine 230; that span reads EDY. Residue threonine 78 coordinates Mg(2+). Positions 194-264 are small ATPAse domain (RuvB-S); that stretch reads TPEELTRIVR…VADAALSMLD (71 aa). Positions 267–345 are head domain (RuvB-H); it reads PAGLDVMDRK…HFGFVPPERV (79 aa). Arginine 322 and arginine 327 together coordinate DNA.

This sequence belongs to the RuvB family. Homohexamer. Forms an RuvA(8)-RuvB(12)-Holliday junction (HJ) complex. HJ DNA is sandwiched between 2 RuvA tetramers; dsDNA enters through RuvA and exits via RuvB. An RuvB hexamer assembles on each DNA strand where it exits the tetramer. Each RuvB hexamer is contacted by two RuvA subunits (via domain III) on 2 adjacent RuvB subunits; this complex drives branch migration. In the full resolvosome a probable DNA-RuvA(4)-RuvB(12)-RuvC(2) complex forms which resolves the HJ.

The protein localises to the cytoplasm. The enzyme catalyses ATP + H2O = ADP + phosphate + H(+). Its function is as follows. The RuvA-RuvB-RuvC complex processes Holliday junction (HJ) DNA during genetic recombination and DNA repair, while the RuvA-RuvB complex plays an important role in the rescue of blocked DNA replication forks via replication fork reversal (RFR). RuvA specifically binds to HJ cruciform DNA, conferring on it an open structure. The RuvB hexamer acts as an ATP-dependent pump, pulling dsDNA into and through the RuvAB complex. RuvB forms 2 homohexamers on either side of HJ DNA bound by 1 or 2 RuvA tetramers; 4 subunits per hexamer contact DNA at a time. Coordinated motions by a converter formed by DNA-disengaged RuvB subunits stimulates ATP hydrolysis and nucleotide exchange. Immobilization of the converter enables RuvB to convert the ATP-contained energy into a lever motion, pulling 2 nucleotides of DNA out of the RuvA tetramer per ATP hydrolyzed, thus driving DNA branch migration. The RuvB motors rotate together with the DNA substrate, which together with the progressing nucleotide cycle form the mechanistic basis for DNA recombination by continuous HJ branch migration. Branch migration allows RuvC to scan DNA until it finds its consensus sequence, where it cleaves and resolves cruciform DNA. This chain is Holliday junction branch migration complex subunit RuvB, found in Laribacter hongkongensis (strain HLHK9).